A 747-amino-acid polypeptide reads, in one-letter code: MLIVMNRGCRLVSRIPLGFRRLKRNPNPGLRNILCRRYSPLALSKEVTEALKNNVPVVALESTIITHGMPYPQNEELAIQVESKVRSMGAVPATIALLNGQCTIGLEQFQLSELAKSGETAYKVSRRDLSYVASQRLNGGTTVAATMILARAAGIDVFATGGIGGVHRGAENSMDISADLIELGRTRVAVVSAGVKSILDIGRTLEVLETQGVPVVTLGPPKSAFPAFFSRESKFQSPLSLETPQLIANMLFSNIQLGQECGTLVAIPTPHHCSIDYEKMEALIETCLQRSVQLGITGKNVTPWLLGELLRESKGKSLNTNIDLVLNNAEKASLIAKELAVLKEKSSFFPTNTGNTFETKPVKQDFFYGKVSDKGVSSSKKKITETTSKPAEVVCVGSVSIDSVLKLDNPLTSKFLGTSHPCHSEQAFGGVAHNMALASSLMGASTKLVSCVGTKSVPTSSIKEYLTKSSLQHTIVEKSNFTSCSYTAINDCNGNLLLAGADMAIMENLSYSEIKDDLNDAKYICFDGNISPSLMLDITTSKSSKQRVVFEPTSGPKTLKILKVLSVASIDFITPNKFELDVLFQAMKDGNFFENESWWQKLNSFGITSSFYNEIERFTKSTGIEEITENGILQKCFHLLPFIKNIIVKLGPNGALLISSEKLQGVNSNSASLFTPGNVTVKYYPVPKVIATPVNASGTGDTFIGTFTALLSKGWGMDDAIDTAQKAAGLTLQCNFSVNPEIKTLLK.

Residues 1 to 379 are pseudouridine-5'-phosphate glycosidase; that stretch reads MLIVMNRGCR…KVSDKGVSSS (379 aa). The Proton donor; for PsiMP glycosidase activity role is filled by Glu-61. Substrate is bound by residues Lys-123 and Val-143. Residue Asp-175 participates in Mn(2+) binding. 177–179 serves as a coordination point for substrate; that stretch reads SAD. The active-site Nucleophile; for PsiMP glycosidase activity is the Lys-196. Residues 380–747 form a pseudouridine kinase region; the sequence is KKKITETTSK…VNPEIKTLLK (368 aa).

The protein in the N-terminal section; belongs to the pseudouridine-5'-phosphate glycosidase family. It in the C-terminal section; belongs to the carbohydrate kinase PfkB family. It depends on Mn(2+) as a cofactor.

It localises to the cytoplasm. The catalysed reaction is D-ribose 5-phosphate + uracil = psi-UMP + H2O. It carries out the reaction pseudouridine + ATP = psi-UMP + ADP + H(+). Functionally, bifunctional enzyme that catalyzes the phosphorylation of pseudouridine to pseudouridine 5'-phosphate (PsiMP), and the reversible cleavage of pseudouridine 5'-phosphate to ribose 5-phosphate and uracil. Is involved in a pseudouridine degradation pathway. The protein is Pseudouridine-metabolizing bifunctional protein C1861.05 of Schizosaccharomyces pombe (strain 972 / ATCC 24843) (Fission yeast).